Here is a 295-residue protein sequence, read N- to C-terminus: Protein U26 (295 aa).

8 consecutive transmembrane segments (helical) span residues 4 to 24, 31 to 51, 66 to 86, 103 to 123, 183 to 203, 218 to 238, 243 to 263, and 274 to 294; these read LTDS…LYTF, SPLG…LTFK, IVFL…VVMI, VMIM…SLFF, FTVE…FLSM, VFFK…ILSG, VCLY…SIML, and FYAG…MYFG.

The protein resides in the membrane. The sequence is that of Protein U26 (U26) from Human herpesvirus 6A (strain Uganda-1102) (HHV-6 variant A).